Consider the following 541-residue polypeptide: Transmembrane protein 87A (541 aa).

An N-terminal signal peptide occupies residues 1–26 (MAAASFQPLKCLLLWVFFVITPPVKA). At 27 to 209 (VPEPGIWTVP…HGFISASDWP (183 aa)) the chain is on the lumenal side. 4 N-linked (GlcNAc...) asparagine glycosylation sites follow: Asn52, Asn109, Asn148, and Asn189. Cystine bridges form between Cys65–Cys116 and Cys82–Cys416. A helical transmembrane segment spans residues 210–230 (LMIFYMVMCIMYILLALLWFI). Over 231-241 (WSACYWKDLLR) the chain is Cytoplasmic. The chain crosses the membrane as a helical span at residues 242–262 (IQFWIAAVIFLGMLEKAVYYA). The Lumenal segment spans residues 263-293 (EYQNTDNTGVSSHGLLIFAELISSIKRTLAR). A helical membrane pass occupies residues 294-314 (LLVTIVSLGYGIIKPRLGAVM). At 315–316 (HR) the chain is on the cytoplasmic side. The helical transmembrane segment at 317–337 (VVGMGVLYFVFAAVEGVMRII) threads the bilayer. At 338–344 (GAKEYDL) the chain is on the lumenal side. A helical membrane pass occupies residues 345–365 (VLLAGIPLALLDSGLCWWIFV). The Cytoplasmic portion of the chain corresponds to 366–384 (SLAQTMKTLKLRKNTVKYS). Residues 385–405 (LYRHFTNTLIFAILASIIFMI) form a helical membrane-spanning segment. Residues 406–422 (WRTKKFQLVDCQADWME) lie on the Lumenal side of the membrane. The chain crosses the membrane as a helical span at residues 423-443 (LWVDDAYWRFLFFIILLVIMF). The Cytoplasmic segment spans residues 444–541 (LWRPSANNQR…MTKYEMSKIE (98 aa)).

It belongs to the LU7TM family. TMEM87 subfamily.

Its subcellular location is the cell membrane. It is found in the golgi apparatus membrane. In terms of biological role, potential monoatomic ion channel gated by mechanical force, implicated in normal touch sensitivity through the generation of mechanically activated currents. However, a direct channel activity is debated and an alternative could be that it functions as a chaperone for an unidentified mechanosensitive ion channel. Could also be involved in cell mechanosensitivity regulating cell adhesion and migration. May also be involved in retrograde transport from endosomes to the trans-Golgi network (TGN). The chain is Transmembrane protein 87A from Xenopus tropicalis (Western clawed frog).